Here is a 343-residue protein sequence, read N- to C-terminus: Nuclear hormone receptor family member nhr-167 (343 aa).

Residues 5-81 (HQKCAVCGRF…VGMTLPSYLL (77 aa)) constitute a DNA-binding region (nuclear receptor). 2 consecutive NR C4-type zinc fingers follow at residues 8–28 (CAVC…CNSC) and 45–64 (CFRG…CTSC). In terms of domain architecture, NR LBD spans 101 to 339 (THNKRMDSLF…KKLVKDGIEA (239 aa)).

Belongs to the nuclear hormone receptor family.

The protein localises to the nucleus. Its function is as follows. Orphan nuclear receptor. The protein is Nuclear hormone receptor family member nhr-167 (nhr-167) of Caenorhabditis elegans.